A 488-amino-acid chain; its full sequence is Galactose-1-phosphate uridylyltransferase (488 aa).

It belongs to the galactose-1-phosphate uridylyltransferase type 2 family.

Its subcellular location is the cytoplasm. The catalysed reaction is alpha-D-galactose 1-phosphate + UDP-alpha-D-glucose = alpha-D-glucose 1-phosphate + UDP-alpha-D-galactose. It functions in the pathway carbohydrate metabolism; galactose metabolism. The polypeptide is Galactose-1-phosphate uridylyltransferase (galT) (Lactobacillus helveticus (Lactobacillus suntoryeus)).